The chain runs to 61 residues: Beta-toxin Tce4 (61 aa).

Residues 1 to 61 (KEGYLMDHEG…KVWEYATNRC (61 aa)) enclose the LCN-type CS-alpha/beta domain. Disulfide bonds link cysteine 11–cysteine 61, cysteine 15–cysteine 37, cysteine 23–cysteine 42, and cysteine 27–cysteine 44. Cysteine 61 carries the post-translational modification Cysteine amide.

It belongs to the long (4 C-C) scorpion toxin superfamily. Sodium channel inhibitor family. Beta subfamily. In terms of tissue distribution, expressed by the venom gland.

Its subcellular location is the secreted. Its function is as follows. Beta toxins bind voltage-independently at site-4 of sodium channels (Nav) and shift the voltage of activation toward more negative potentials thereby affecting sodium channel activation and promoting spontaneous and repetitive firing. The sequence is that of Beta-toxin Tce4 from Tityus cerroazul (Scorpion).